Consider the following 2280-residue polypeptide: Acetyl-CoA carboxylase (2280 aa).

Residues 68–577 (VITSILIANN…TTGWLDRLIA (510 aa)) enclose the Biotin carboxylation domain. The ATP-grasp domain occupies 226–418 (ETNIVTVDDD…LPAAQLQVAM (193 aa)). An ATP-binding site is contributed by 266–271 (GGGGKG). Mn(2+)-binding residues include E375, E389, and N391. R393 is a catalytic residue. One can recognise a Biotinyl-binding domain in the interval 704 to 778 (LEQENDPTQL…DAGDILGILT (75 aa)). K745 bears the N6-biotinyllysine mark. Phosphoserine occurs at positions 1179 and 1181. The CoA carboxyltransferase N-terminal domain maps to 1524–1863 (PYPTKEWLQP…KRNNPVPISP (340 aa)). Residues 1524 to 2181 (PYPTKEWLQP…EHYALQKITQ (658 aa)) are carboxyltransferase. CoA contacts are provided by R1772, K2074, and R2076. Positions 1867–2181 (TWDRDVEFYP…EHYALQKITQ (315 aa)) constitute a CoA carboxyltransferase C-terminal domain.

As to quaternary structure, interacts with sad1. Biotin serves as cofactor. Mn(2+) is required as a cofactor.

It localises to the cytoplasm. It catalyses the reaction hydrogencarbonate + acetyl-CoA + ATP = malonyl-CoA + ADP + phosphate + H(+). The catalysed reaction is N(6)-biotinyl-L-lysyl-[protein] + hydrogencarbonate + ATP = N(6)-carboxybiotinyl-L-lysyl-[protein] + ADP + phosphate + H(+). It participates in lipid metabolism; malonyl-CoA biosynthesis; malonyl-CoA from acetyl-CoA: step 1/1. With respect to regulation, by phosphorylation. Carries out three functions: biotin carboxyl carrier protein, biotin carboxylase and carboxyltransferase. This is Acetyl-CoA carboxylase (cut6) from Schizosaccharomyces pombe (strain 972 / ATCC 24843) (Fission yeast).